The sequence spans 466 residues: Asparagine--tRNA ligase (466 aa).

It belongs to the class-II aminoacyl-tRNA synthetase family. In terms of assembly, homodimer.

The protein localises to the cytoplasm. It catalyses the reaction tRNA(Asn) + L-asparagine + ATP = L-asparaginyl-tRNA(Asn) + AMP + diphosphate + H(+). In Shewanella putrefaciens (strain CN-32 / ATCC BAA-453), this protein is Asparagine--tRNA ligase.